A 213-amino-acid polypeptide reads, in one-letter code: Orotate phosphoribosyltransferase (213 aa).

Residue lysine 26 participates in 5-phospho-alpha-D-ribose 1-diphosphate binding. Residue 34-35 (FF) coordinates orotate. 5-phospho-alpha-D-ribose 1-diphosphate-binding positions include 72 to 73 (YK), arginine 99, lysine 100, lysine 103, histidine 105, and 124 to 132 (DDVITAGTA). 2 residues coordinate orotate: threonine 128 and arginine 156.

The protein belongs to the purine/pyrimidine phosphoribosyltransferase family. PyrE subfamily. As to quaternary structure, homodimer. Requires Mg(2+) as cofactor.

It catalyses the reaction orotidine 5'-phosphate + diphosphate = orotate + 5-phospho-alpha-D-ribose 1-diphosphate. It participates in pyrimidine metabolism; UMP biosynthesis via de novo pathway; UMP from orotate: step 1/2. Catalyzes the transfer of a ribosyl phosphate group from 5-phosphoribose 1-diphosphate to orotate, leading to the formation of orotidine monophosphate (OMP). In Pseudomonas syringae pv. syringae (strain B728a), this protein is Orotate phosphoribosyltransferase.